An 83-amino-acid chain; its full sequence is Hainantoxin-III 11 (83 aa).

The signal sequence occupies residues 1–21 (MKASMFLALAGLVLLFVVGYA). Residues 22-48 (SESEEKDFPRELLSKIFAVDDFKGEER) constitute a propeptide that is removed on maturation. 3 cysteine pairs are disulfide-bonded: Cys-50–Cys-65, Cys-57–Cys-70, and Cys-64–Cys-77. Leu-81 carries the post-translational modification Leucine amide.

Belongs to the neurotoxin 10 (Hwtx-1) family. 15 (Hntx-3) subfamily. In terms of assembly, monomer. As to expression, expressed by the venom gland.

The protein localises to the secreted. Its function is as follows. Selective antagonist of neuronal tetrodotoxin (TTX)-sensitive voltage-gated sodium channels (IC(50)=1270 nM on Nav1.1/SCN1A, 270 nM on Nav1.2/SCN2A, 491 nM on Nav1.3/SCN3A and 232 nM on Nav1.7/SCN9A). This toxin suppress Nav1.7 current amplitude without significantly altering the activation, inactivation, and repriming kinetics. Short extreme depolarizations partially activate the toxin-bound channel, indicating voltage-dependent inhibition of this toxin. This toxin increases the deactivation of the Nav1.7 current after extreme depolarizations. The toxin-Nav1.7 complex is gradually dissociated upon prolonged strong depolarizations in a voltage-dependent manner, and the unbound toxin rebinds to Nav1.7 after a long repolarization. Moreover, analysis of chimeric channels showed that the DIIS3-S4 linker is critical for toxin binding to Nav1.7. These data are consistent with this toxin interacting with Nav1.7 site 4 and trapping the domain II voltage sensor in the closed state. The polypeptide is Hainantoxin-III 11 (Cyriopagopus hainanus (Chinese bird spider)).